Consider the following 101-residue polypeptide: Guanyl-specific ribonuclease Po1 (101 aa).

Q1 carries the post-translational modification Pyrrolidone carboxylic acid. 3 cysteine pairs are disulfide-bonded: C7–C84, C9–C99, and C48–C82. Residue H36 is part of the active site. E54 functions as the Proton acceptor in the catalytic mechanism. Catalysis depends on H87, which acts as the Proton donor.

This sequence belongs to the ribonuclease N1/T1 family.

The enzyme catalyses [RNA] containing guanosine + H2O = an [RNA fragment]-3'-guanosine-3'-phosphate + a 5'-hydroxy-ribonucleotide-3'-[RNA fragment].. Inhibited by divalent cations. Inhibition decreases in the order zinc, lead, cadmium, nickel, mercury. The protein is Guanyl-specific ribonuclease Po1 of Pleurotus ostreatus (Oyster mushroom).